Here is a 488-residue protein sequence, read N- to C-terminus: MAYSQGGGKKKVCYYYDGDIGNYYYGQGHPMKPHRIRMTHNLLLNYGLYRKMEIYRPHKATAEEMTKYHSDEYIKFLRSIRPDNMSEYSKQMQRFNVGEDCPVFDGLFEFCQLSTGGSVAGAVKLNRQQTDMAVNWAGGLHHAKKSEASGFCYVNDIVLAILELLKYHQRVLYIDIDIHHGDGVEEAFYTTDRVMTVSFHKYGEYFPGTGDLRDIGAGKGKYYAVNFPMRDGIDDESYGQIFKPIISKVMEMYQPSAVVLQCGADSLSGDRLGCFNLTVKGHAKCVEVVKTFNLPLLMLGGGGYTIRNVARCWTYETAVALDCEIPNELPYNDYFEYFGPDFKLHISPSNMTNQNTPEYMEKIKQRLFENLRMLPHAPGVQMQAIPEDAVHEDSGDEDGEDPDKRISIRASDKRIACDEEFSDSEDEGEGGRRNVADHKKGAKKARIEEDKKETEDKKTDVKEEDKSKDNSGEKTDTKGTKSEQLSNP.

Positions 9-322 are histone deacetylase; that stretch reads KKKVCYYYDG…WTYETAVALD (314 aa). Residues Gly-28 and Lys-32 each contribute to the 1D-myo-inositol 1,4,5,6-tetrakisphosphate site. Residue Lys-75 is modified to N6-acetyllysine; alternate. A Glycyl lysine isopeptide (Lys-Gly) (interchain with G-Cter in SUMO2); alternate cross-link involves residue Lys-75. Residue His-142 is part of the active site. Residues Asp-175, Asp-177, His-179, Phe-188, Thr-191, Val-194, Ser-198, and Phe-199 each contribute to the Ca(2+) site. Asp-177 and His-179 together coordinate Zn(2+). Lys-221 bears the N6-acetyllysine mark. Tyr-223 provides a ligand contact to Ca(2+). Cys-262 is subject to S-nitrosocysteine. A Zn(2+)-binding site is contributed by Asp-265. Position 271 (Arg-271) interacts with 1D-myo-inositol 1,4,5,6-tetrakisphosphate. Cys-274 carries the S-nitrosocysteine modification. Positions 389–488 are disordered; it reads AVHEDSGDED…GTKSEQLSNP (100 aa). 4 positions are modified to phosphoserine: Ser-394, Ser-407, Ser-422, and Ser-424. Over residues 402-417 the composition is skewed to basic and acidic residues; the sequence is PDKRISIRASDKRIAC. A compositionally biased stretch (acidic residues) spans 418-428; that stretch reads DEEFSDSEDEG. Over residues 429 to 481 the composition is skewed to basic and acidic residues; the sequence is EGGRRNVADHKKGAKKARIEEDKKETEDKKTDVKEEDKSKDNSGEKTDTKGTK. Glycyl lysine isopeptide (Lys-Gly) (interchain with G-Cter in SUMO2) cross-links involve residues Lys-439, Lys-452, Lys-458, Lys-462, Lys-478, and Lys-481.

Belongs to the histone deacetylase family. HD type 1 subfamily. In terms of assembly, part of the core histone deacetylase (HDAC) complex composed of HDAC1, HDAC2, RBBP4 and RBBP7, the core complex associates with SIN3, SAP18 and SAP30 to form the SIN3 HDAC complex. Component of the nucleosome remodeling and deacetylase (NuRD) repressor complex, composed of core proteins MTA1, MTA2, MTA3, RBBP4, RBBP7, HDAC1, HDAC2, MBD2, MBD3, and peripherally associated proteins CDK2AP1, CDK2AP2, GATAD2A, GATAD2B, CHD3, CHD4 and CHD5. The exact stoichiometry of the NuRD complex is unknown, and some subunits such as MBD2 and MBD3, GATAD2A and GATAD2B, and CHD3, CHD4 and CHD5 define mutually exclusive NuRD complexes. Component of a RCOR/GFI/KDM1A/HDAC complex. Component of a BHC histone deacetylase complex that contains HDAC1, HDAC2, HMG20B, KDM1A, RCOR1 and PHF21A. The BHC complex may also contain ZMYM2, ZNF217, ZMYM3, GSE1 and GTF2I. Part of a complex containing the core histones H2A, H2B, H3 and H4, DEK and unphosphorylated DAXX. Part of a complex containing ATR and CHD4. Forms a heterologous complex at least with YY1. Interacts in the late S-phase of DNA-replication with DNMT1 in the other transcriptional repressor complex composed of DNMT1, DMAP1, PCNA, CAF1. Component of a mSin3A corepressor complex that contains SIN3A, SAP130, SUDS3, ARID4B, HDAC1 and HDAC2. Part of a complex composed of TRIM28, HDAC1, HDAC2 and EHMT2. Part of a complex containing at least CDYL, MIER1, MIER2, HDAC1 and HDAC2. Component of a histone deacetylase complex containing DNTTIP1, ZNF541, HDAC1 and HDAC2. Forms a complex comprising APPL1, RUVBL2, APPL2, CTNNB1 and HDAC1. Interacts directly with GFI1. Interacts directly with GFI1B. Interacts with APEX1; the interaction is not dependent on the acetylated status of APEX1. Interacts with ATR. Interacts with BCL6 (non-acetylated form). Interacts with BEND3. Interacts with CBFA2T3. Interacts with CDK2AP1. Interacts with CHD4. Interacts with CHD5. Interacts with CHFR. Interacts with CRY1. Interacts with DNMT1. Interacts with GATAD2A. Interacts with HCFC1. Interacts with HDAC7. Interacts with HDAC10. Interacts with INSM1. Interacts with KDM4A. Interacts with MACROH2A1 (via the non-histone region). Interacts with MBD3L2. Interacts with MTA1, with a preference for sumoylated MTA1. Interacts with NACC2. Interacts with NRIP1. Interacts with PELP1. Interacts with PIMREG. Interacts with PRDM6. Interacts with PWWP2B. Interacts with SAP30. Interacts with SAP30L. Interacts with SETDB1. Interacts with SIX3. Interacts with SMARCAD1. Interacts with SNW1. Interacts with SPHK2. Interacts with SPEN/MINT. Interacts (CK2 phosphorylated form) with SP3. Interacts with SUV39H1. Interacts with TSHZ3 (via its N-terminus). Interacts with ZMYND8. Interacts with ZNF431. Interacts with ZNF263; recruited to the SIX3 promoter along with other proteins involved in chromatin modification and transcriptional corepression where it contributes to transcriptional repression. Identified in a complex with HDAC1, KCTD19, DNTTIP1 and ZNF541. Component of the SIN3B complex, which includes SIN3B, HDAC2, PHF12 and MORF4L1; interacts directly with all subunits. The cofactor is Zn(2+). Requires Ca(2+) as cofactor. Post-translationally, S-nitrosylated by GAPDH. In neurons, S-nitrosylation at Cys-262 and Cys-274 does not affect enzyme activity, but induces HDAC2 release from chromatin. This in turn increases acetylation of histones surrounding neurotrophin-dependent gene promoters and promotes their transcription. In embryonic cortical neurons, S-Nitrosylation regulates dendritic growth and branching. In terms of tissue distribution, widely expressed; lower levels in brain and lung.

The protein resides in the nucleus. It is found in the cytoplasm. It catalyses the reaction N(6)-acetyl-L-lysyl-[histone] + H2O = L-lysyl-[histone] + acetate. It carries out the reaction N(6)-acetyl-L-lysyl-[protein] + H2O = L-lysyl-[protein] + acetate. The enzyme catalyses N(6)-(2E)-butenoyl-L-lysyl-[protein] + H2O = (2E)-2-butenoate + L-lysyl-[protein]. The catalysed reaction is N(6)-(2-hydroxyisobutanoyl)-L-lysyl-[protein] + H2O = 2-hydroxy-2-methylpropanoate + L-lysyl-[protein]. It catalyses the reaction N(6)-[(S)-lactoyl]-L-lysyl-[protein] + H2O = (S)-lactate + L-lysyl-[protein]. Inositol tetraphosphate (1D-myo-inositol 1,4,5,6-tetrakisphosphate) may act as an intermolecular glue between HDAC2 and N-Cor repressor complex components. Histone deacetylase that catalyzes the deacetylation of lysine residues on the N-terminal part of the core histones (H2A, H2B, H3 and H4). Histone deacetylation gives a tag for epigenetic repression and plays an important role in transcriptional regulation, cell cycle progression and developmental events. Histone deacetylases act via the formation of large multiprotein complexes. Forms transcriptional repressor complexes by associating with MAD, SIN3, YY1 and N-COR. Component of a RCOR/GFI/KDM1A/HDAC complex that suppresses, via histone deacetylase (HDAC) recruitment, a number of genes implicated in multilineage blood cell development. Acts as a component of the histone deacetylase NuRD complex which participates in the remodeling of chromatin. Component of the SIN3B complex that represses transcription and counteracts the histone acetyltransferase activity of EP300 through the recognition H3K27ac marks by PHF12 and the activity of the histone deacetylase HDAC2. Also deacetylates non-histone targets: deacetylates TSHZ3, thereby regulating its transcriptional repressor activity. May be involved in the transcriptional repression of circadian target genes, such as PER1, mediated by CRY1 through histone deacetylation. Involved in MTA1-mediated transcriptional corepression of TFF1 and CDKN1A. In addition to protein deacetylase activity, also acts as a protein-lysine deacylase by recognizing other acyl groups: catalyzes removal of (2E)-butenoyl (crotonyl), lactoyl (lactyl) and 2-hydroxyisobutanoyl (2-hydroxyisobutyryl) acyl groups from lysine residues, leading to protein decrotonylation, delactylation and de-2-hydroxyisobutyrylation, respectively. This is Histone deacetylase 2 from Homo sapiens (Human).